A 387-amino-acid polypeptide reads, in one-letter code: Putative transmembrane protein At3g54730 (387 aa).

Over residues 10 to 25 (PAPPLLLPSPNPPPCA) the composition is skewed to pro residues. Positions 10–45 (PAPPLLLPSPNPPPCALPQDLTSLVSPSEPPDPPDP) are disordered. The next 8 helical transmembrane spans lie at 97–117 (VFPL…HPLV), 128–148 (GSNF…ILQF), 154–174 (VMIS…MILL), 186–206 (VLFS…VGLI), 221–241 (IQKL…FLEI), 292–312 (SWCF…YPLE), 335–355 (FSTI…FIFF), and 362–382 (PFVA…LNHF).

It is found in the membrane. The protein is Putative transmembrane protein At3g54730 of Arabidopsis thaliana (Mouse-ear cress).